The sequence spans 109 residues: Large ribosomal subunit protein uL22 (109 aa).

Belongs to the universal ribosomal protein uL22 family. Part of the 50S ribosomal subunit.

Its function is as follows. This protein binds specifically to 23S rRNA; its binding is stimulated by other ribosomal proteins, e.g. L4, L17, and L20. It is important during the early stages of 50S assembly. It makes multiple contacts with different domains of the 23S rRNA in the assembled 50S subunit and ribosome. The globular domain of the protein is located near the polypeptide exit tunnel on the outside of the subunit, while an extended beta-hairpin is found that lines the wall of the exit tunnel in the center of the 70S ribosome. The polypeptide is Large ribosomal subunit protein uL22 (Aromatoleum aromaticum (strain DSM 19018 / LMG 30748 / EbN1) (Azoarcus sp. (strain EbN1))).